The primary structure comprises 34 residues: Photosystem II reaction center protein Psb30 (34 aa).

The helical transmembrane segment at 7 to 27 (VAQLLALFVIITSGPAIIILI) threads the bilayer.

The protein belongs to the Psb30/Ycf12 family. As to quaternary structure, PSII is composed of 1 copy each of membrane proteins PsbA, PsbB, PsbC, PsbD, PsbE, PsbF, PsbH, PsbI, PsbJ, PsbK, PsbL, PsbM, PsbT, PsbX, PsbY, PsbZ, Psb30/Ycf12, peripheral proteins of the oxygen-evolving complex and a large number of cofactors. It forms dimeric complexes.

The protein resides in the plastid. It is found in the chloroplast thylakoid membrane. A core subunit of photosystem II (PSII), probably helps stabilize the reaction center. This chain is Photosystem II reaction center protein Psb30, found in Guillardia theta (Cryptophyte).